The following is a 279-amino-acid chain: Small ribosomal subunit protein uS2 (279 aa).

The interval 255–279 (LLAGATTAAPEAAAGEAAAAPEQSS) is disordered.

It belongs to the universal ribosomal protein uS2 family.

This is Small ribosomal subunit protein uS2 from Mycolicibacterium gilvum (strain PYR-GCK) (Mycobacterium gilvum (strain PYR-GCK)).